Consider the following 287-residue polypeptide: Glycine--tRNA ligase alpha subunit (287 aa).

The protein belongs to the class-II aminoacyl-tRNA synthetase family. Tetramer of two alpha and two beta subunits.

It is found in the cytoplasm. The enzyme catalyses tRNA(Gly) + glycine + ATP = glycyl-tRNA(Gly) + AMP + diphosphate. In Campylobacter jejuni (strain RM1221), this protein is Glycine--tRNA ligase alpha subunit.